The sequence spans 305 residues: MIKQRTLKRIVQATGVGLHTGKKVTLTMRPAPANTGVIYRRTDLNPPVDFPADAKSVRDTMLCTCLVNEDDVRISTVEHLNAALAGLGIDNIVIEVDAPEIPIMDGSAAPFVFLLLDAGIEELRTAKKFIRIKETVRVEDGDKWAEMRPYNGFKLDFTIDFNHPAIDASTQRYKLDFSAESFMSQISRARTFGFMRDIEYLQSKGLCLGGSFDCAIVVDDYRVLNDDGLRFEDEFVRHKMLDAIGDLFMCGYNIIGEFTAFKSGHALNNKLLQAVLAKESAWEFVTFEDEAKMPVAFKAPSTVFA.

Residues His-79, His-238, and Asp-242 each contribute to the Zn(2+) site. The Proton donor role is filled by His-265.

It belongs to the LpxC family. Zn(2+) is required as a cofactor.

It carries out the reaction a UDP-3-O-[(3R)-3-hydroxyacyl]-N-acetyl-alpha-D-glucosamine + H2O = a UDP-3-O-[(3R)-3-hydroxyacyl]-alpha-D-glucosamine + acetate. It functions in the pathway glycolipid biosynthesis; lipid IV(A) biosynthesis; lipid IV(A) from (3R)-3-hydroxytetradecanoyl-[acyl-carrier-protein] and UDP-N-acetyl-alpha-D-glucosamine: step 2/6. Catalyzes the hydrolysis of UDP-3-O-myristoyl-N-acetylglucosamine to form UDP-3-O-myristoylglucosamine and acetate, the committed step in lipid A biosynthesis. The chain is UDP-3-O-acyl-N-acetylglucosamine deacetylase from Proteus mirabilis (strain HI4320).